A 77-amino-acid chain; its full sequence is UPF0349 protein lwe2340 (77 aa).

It belongs to the UPF0349 family.

The protein is UPF0349 protein lwe2340 of Listeria welshimeri serovar 6b (strain ATCC 35897 / DSM 20650 / CCUG 15529 / CIP 8149 / NCTC 11857 / SLCC 5334 / V8).